Consider the following 329-residue polypeptide: Signal recognition particle receptor FtsY (329 aa).

GTP-binding positions include 127-134 (GVNGVGKT), 209-213 (DTAGR), and 273-276 (TKLD).

The protein belongs to the GTP-binding SRP family. FtsY subfamily. As to quaternary structure, part of the signal recognition particle protein translocation system, which is composed of SRP and FtsY.

It is found in the cell membrane. The protein resides in the cytoplasm. It carries out the reaction GTP + H2O = GDP + phosphate + H(+). Functionally, involved in targeting and insertion of nascent membrane proteins into the cytoplasmic membrane. Acts as a receptor for the complex formed by the signal recognition particle (SRP) and the ribosome-nascent chain (RNC). The polypeptide is Signal recognition particle receptor FtsY (Bacillus subtilis (strain 168)).